A 136-amino-acid chain; its full sequence is Histone H3.1/H3.2 (136 aa).

The tract at residues 1–43 (MARTKQTARKSTGGKAPRKQLASKAARKSAPSTGGVKKPHRYK) is disordered. Lys-5 is subject to N6,N6,N6-trimethyllysine; alternate. Position 5 is an N6,N6-dimethyllysine; alternate (Lys-5). Lys-5 and Lys-10 each carry N6-methyllysine; alternate. N6-acetyllysine; alternate is present on Lys-10. A Phosphoserine modification is found at Ser-11. Lys-15 carries the post-translational modification N6,N6-dimethyllysine; alternate. Residues Lys-15, Lys-19, Lys-24, Lys-28, and Lys-37 each carry the N6-acetyllysine; alternate modification. N6-methyllysine; alternate occurs at positions 19, 24, 28, and 37. Lys-28 and Lys-37 each carry N6,N6,N6-trimethyllysine; alternate. N6,N6-dimethyllysine; alternate occurs at positions 28 and 37. N6-acetyllysine is present on residues Lys-57 and Lys-65. N6,N6,N6-trimethyllysine; alternate is present on Lys-80. Lys-80 bears the N6,N6-dimethyllysine; alternate mark. The residue at position 80 (Lys-80) is an N6-methyllysine; alternate.

Belongs to the histone H3 family. In terms of assembly, the nucleosome is a histone octamer containing two molecules each of H2A, H2B, H3 and H4 assembled in one H3-H4 heterotetramer and two H2A-H2B heterodimers. The octamer wraps approximately 147 bp of DNA. Phosphorylated to form H3S10ph. H3S10ph promotes subsequent H3K14ac formation and is required for transcriptional activation through TBP recruitment to the promoters. Post-translationally, mono-, di- and trimethylated by the COMPASS complex to form H3K4me1/2/3. H3K4me activates gene expression by regulating transcription elongation and plays a role in telomere length maintenance. H3K4me enrichment correlates with transcription levels, and occurs in a 5' to 3' gradient with H3K4me3 enrichment at the 5'-end of genes, shifting to H3K4me2 and then H3K4me1. Methylated by SET2 to form H3K36me. H3K36me represses gene expression. Methylated by DOT1 to form H3K79me. H3K79me is required for association of SIR proteins with telomeric regions and for telomeric silencing. The COMPASS-mediated formation of H3K4me2/3 and the DOT1-mediated formation of H3K79me require H2BK123ub1. In terms of processing, acetylation of histone H3 leads to transcriptional activation. H3K14ac formation by GCN5 is promoted by H3S10ph. H3K14ac can also be formed by ESA1. H3K56ac formation occurs predominantly in newly synthesized H3 molecules during G1, S and G2/M of the cell cycle and may be involved in DNA repair.

The protein localises to the nucleus. The protein resides in the chromosome. Functionally, core component of nucleosome. Nucleosomes wrap and compact DNA into chromatin, limiting DNA accessibility to the cellular machineries which require DNA as a template. Histones thereby play a central role in transcription regulation, DNA repair, DNA replication and chromosomal stability. DNA accessibility is regulated via a complex set of post-translational modifications of histones, also called histone code, and nucleosome remodeling. This Meyerozyma guilliermondii (strain ATCC 6260 / CBS 566 / DSM 6381 / JCM 1539 / NBRC 10279 / NRRL Y-324) (Yeast) protein is Histone H3.1/H3.2 (HHT1).